A 1091-amino-acid chain; its full sequence is MPVSVAVCETTNVVNAALRESLGVGIGSGGASSDDKSAGEDTNSLQNHIVANAKRILMTKIEYEEVPNYQEAVLENLKSKYIVIKPTNPTNGCNLNGNTANTFGNKNNAGKIVGANGHDNNGRKLSDHPNQNHNHANPNGHHANPNELPKPKRVLYPRENIRIGWKQSERKWQVGSGMINAGNTCYLNSTLQALFHIPALANWLVSEQAHMENCNVSESGSFCIICAMAKTLQATQTTQSAVRPFLIYTKLKQICKHMIVGRQEDAHEFLRFLVEAMERAYLMRFRNYKELDQLVKETTPLGQIFGGYLRSEVRCLSCNHVSITFQHFQDLLLDIRKSDSLEEAFEGYFSREKLEDFGYKCEGCKKKVSATKQFRLERAPITLCIQLKRFSMMGNKLTKQITFKPRIDLSKFAARSPAASVQPLIYRLVSMVTHLGVSQHCGHYTAIGSTEAGSYYNFDDSYVRPIAIQSVCNTNAYIMFYELDPLQTSSPAAARANGLRLTNGHGPVPVAVPATVSSPLPSPAKFIGPQLPPGGINGYSNGHGPKTTIQFKPQHQPSHQQNGVQQSAKSPLLSTHVKVEAAAGAAALAASAAPTANGNKSSSNHSNHKSVNQQHYLPISSEDEDSEDEVKARPTVQLPSMPKMDDCMDSGKPKSPVKTPVKTPLKSLVPYESASEEEEVVPLPNPNARKRSSDSSDSEHEPTTSSVQLNGHSKTNGSLSNGSSKSTDAIDEIFKSLKGYQAKKKSADSEDDDDDEDEPNNQLTNGWHPQKQSQSQSRSGPPSPKTPPSPAVIKSKTGIWKVTRDDGDDDEDDDDDDDEVVEEARAVRTPVKNHRNPFASSKTATDSPTTPGAKRQKLLNGSAIKTQQQPRAGNGYQSEATANGGTVNELLKQSHRGYSSSVLSWNGKPAELEKEPFVLVCAKRIAGHGSLDGSGSGSNTDIIDTEIPAAAVNFPSGSCSFSLLADARDQRQRDLADDEENEMDRGRQRKVKSGSAKISNSTPGYNPFMEFENQKRWHKNGGGGGFPRFYQNQNFRQGFQQRNKFKFNRFGGPGSAKFQQQRALQRHLAAGGGFTRRQPTHSAQQQQQQQS.

Residues Ala115–Lys152 are disordered. Residues His128–Asn146 are compositionally biased toward low complexity. The region spanning Ser176 to Asp484 is the USP domain. Catalysis depends on Cys185, which acts as the Nucleophile. The active-site Proton acceptor is the His443. Phosphoserine occurs at positions 518 and 522. Disordered regions lie at residues Pro523–Leu572, Pro594–Lys892, Gln972–Pro1007, and Leu1068–Ser1091. Residues Thr547–Leu572 show a composition bias toward polar residues. Residues Pro594–Asn612 show a composition bias toward low complexity. Residues Lys643–Lys652 are compositionally biased toward basic and acidic residues. The segment covering Pro653–Ser667 has biased composition (low complexity). Residues Thr659 and Thr663 each carry the phosphothreonine modification. Residues Ser673 and Ser675 each carry the phosphoserine modification. The span at Arg691–Pro702 shows a compositional bias: basic and acidic residues. A compositionally biased stretch (polar residues) spans Thr703–Thr727. Ser749 is modified (phosphoserine). Residues Ser749 to Pro759 are compositionally biased toward acidic residues. Residues Pro769–Gly780 are compositionally biased toward low complexity. Residues Pro781 to Pro790 are compositionally biased toward pro residues. Phosphoserine is present on Ser783. The residue at position 786 (Thr786) is a Phosphothreonine. Residue Ser789 is modified to Phosphoserine. Residues Asp806–Val821 are compositionally biased toward acidic residues. A Phosphothreonine modification is found at Thr829. Polar residues-rich tracts occupy residues Phe838–Thr850 and Ala863–Thr886. At Ser847 the chain carries Phosphoserine. Thr850 carries the phosphothreonine modification.

The protein belongs to the peptidase C19 family. In terms of assembly, interacts with atms/PAF1, but not with CycT.

The protein resides in the nucleus. Its subcellular location is the nucleolus. It carries out the reaction Thiol-dependent hydrolysis of ester, thioester, amide, peptide and isopeptide bonds formed by the C-terminal Gly of ubiquitin (a 76-residue protein attached to proteins as an intracellular targeting signal).. Functionally, required for maintaining multiple types of adult stem cells, including male and female germline, epithelial follicle cell and intestinal stem cells. May function as a transcriptional repressor by continually deubiquiting histone H2B at the promoters of genes critical for cellular differentiation, thereby preventing histone H3 'Lys-4' trimethylation (H3K4). Controls selective autophagy activation by ubiquitinated proteins. This is Ubiquitin carboxyl-terminal hydrolase 36 (Usp36) from Drosophila ananassae (Fruit fly).